The following is a 563-amino-acid chain: Inclusion body clearance protein IML2 (563 aa).

The protein belongs to the IML2 family. As to quaternary structure, interacts with lipid droplet proteins.

The protein resides in the cytoplasm. It localises to the nucleus. Its function is as follows. Inclusion body (IB) resident protein that interacts strongly with lipid droplet (LD) proteins. Involved in LD-mediated IB clearing after protein folding stress, probably by enabling access to the IBs of an LD-stored soluble sterol derivative that acts as a chaperone in inclusion clearing. This Schizosaccharomyces pombe (strain 972 / ATCC 24843) (Fission yeast) protein is Inclusion body clearance protein IML2.